The primary structure comprises 813 residues: Tax1-binding protein 1 homolog (813 aa).

Phosphoserine is present on residues serine 124, serine 138, and serine 225. Positions 144–627 (TTKAGLLELK…LENQAERKME (484 aa)) form a coiled coil. The segment at 320-420 (EEIGRLQLCL…ELKLNAMKKD (101 aa)) is oligomerization. Residues 489 to 502 (DASVNTDPATSAST) are compositionally biased toward polar residues. Positions 489-508 (DASVNTDPATSASTVDVKPS) are disordered. 3 positions are modified to phosphoserine: serine 617, serine 633, and serine 690. The tract at residues 663 to 738 (YASQETRDGA…DPPSQHLRGH (76 aa)) is disordered. 2 UBZ1-type zinc fingers span residues 751-777 (HKKCPLCELMFPPNYDQSKFEEHVESH) and 778-804 (WKVCPMCSEQFPPDYDQQVFERHVQTH). Zn(2+) is bound by residues cysteine 754, cysteine 757, histidine 773, histidine 777, cysteine 781, cysteine 784, histidine 800, and histidine 804.

In terms of assembly, homooligomer. Interacts with TNFAIP3. Interacts with STARD13. Interacts with MYO6. Interacts with TOM1; the interaction is indirect and is mediated by MYO6, which acts as a bridge between TOM1 and TAX1BP1. Interacts with MAVS; this interaction induces MAVS polyubiquitination. Interacts with TNIP1. Interacts with TRAF6; this interaction mediates deubiquitination of TRAF6 and inhibition of NF-kappa-B activation. Interacts with RIPK1; this interaction negatively regulates RIPK1 ubiquitination. Interacts with NBR1. Interacts with TBK1. Interacts with RB1CC1. Interacts with SQSTM1. Interacts with AZI2.

The protein resides in the cytoplasm. Its subcellular location is the mitochondrion. It localises to the preautophagosomal structure. It is found in the cytoplasmic vesicle. The protein localises to the autophagosome. Its function is as follows. Ubiquitin-binding adapter that participates in inflammatory, antiviral and innate immune processes as well as selective autophagy regulation. Plays a key role in the negative regulation of NF-kappa-B and IRF3 signalings by acting as an adapter for the ubiquitin-editing enzyme A20/TNFAIP3 to bind and inactivate its substrates. Disrupts the interactions between the E3 ubiquitin ligase TRAF3 and TBK1/IKBKE to attenuate 'Lys63'-linked polyubiquitination of TBK1 and thereby IFN-beta production. Also recruits A20/TNFAIP3 to ubiquitinated signaling proteins TRAF6 and RIPK1, leading to their deubiquitination and disruption of IL-1 and TNF-induced NF-kappa-B signaling pathways. Inhibits virus-induced apoptosis by inducing the 'Lys-48'-linked polyubiquitination and degradation of MAVS via recruitment of the E3 ligase ITCH, thereby attenuating MAVS-mediated apoptosis signaling. As a macroautophagy/autophagy receptor, facilitates the xenophagic clearance of pathogenic bacteria such as Salmonella typhimurium and Mycobacterium tuberculosis. Upon NBR1 recruitment to the SQSTM1-ubiquitin condensates, acts as the major recruiter of RB1CC1 to these ubiquitin condensates to promote their autophagic degradation. This Pongo abelii (Sumatran orangutan) protein is Tax1-binding protein 1 homolog (TAX1BP1).